The chain runs to 323 residues: E3 ubiquitin-protein ligase SIRP1 (323 aa).

The RING-type; atypical zinc-finger motif lies at 199-240 (CSVCLDDLEVGSQAKQMPCEHKFHSSCILPWLELHSSCPVCR). Disordered regions lie at residues 248–280 (TKDL…ESSN) and 296–323 (REAQ…AGHS). Residues 259 to 269 (RVEDSHEEVRA) show a composition bias toward basic and acidic residues.

The protein localises to the cytoplasm. It catalyses the reaction S-ubiquitinyl-[E2 ubiquitin-conjugating enzyme]-L-cysteine + [acceptor protein]-L-lysine = [E2 ubiquitin-conjugating enzyme]-L-cysteine + N(6)-ubiquitinyl-[acceptor protein]-L-lysine.. It functions in the pathway protein modification; protein ubiquitination. In terms of biological role, possesses E3 ubiqutin-protein ligase activity in vitro. Acts as negative regulator of salinity stress tolerance mediated by the ubiquitin-proteasome degradation pathway. This chain is E3 ubiquitin-protein ligase SIRP1, found in Oryza sativa subsp. japonica (Rice).